A 32-amino-acid polypeptide reads, in one-letter code: CLQFGSTCFLGDDDICCSGECFYSGGTFGICS.

3 cysteine pairs are disulfide-bonded: Cys1-Cys17, Cys8-Cys21, and Cys16-Cys31. Ser32 bears the Serine amide mark.

In terms of tissue distribution, expressed by the venom duct.

The protein resides in the secreted. Its function is as follows. Elicits hyperactivity when injected intracranially into mice and produces paralysis when injected into the pedal muscle of freshwater snails, Pomacea paludosa, but it has no apparent effect after intramuscular injection into the limpet Patella opea or the freshwater fish Lebistes reticulatus. In Conus spurius (Alphabet cone), this protein is Conotoxin sr7a.